The primary structure comprises 350 residues: uncharacterized protein (350 aa).

The disordered stretch occupies residues 330–350; the sequence is RHPGDLRSEPHYRPSAKLAEF. Over residues 331–341 the composition is skewed to basic and acidic residues; the sequence is HPGDLRSEPHY.

This is an uncharacterized protein from Mycobacterium tuberculosis.